Reading from the N-terminus, the 1464-residue chain is Gag-Pol polyprotein (1464 aa).

A lipid anchor (N-myristoyl glycine; by host) is attached at Gly2. The segment at 7-31 is interaction with Gp41; the sequence is VLRGKKADELERIRLRPGGKKKYRL. The short motif at 16 to 22 is the Nuclear export signal element; the sequence is LERIRLR. The Nuclear localization signal signature appears at 26-32; sequence KKKYRLK. Positions 111–136 are disordered; it reads ETGTAEKMPSTSRPTAPSSEKGGNYP. Positions 119-128 are enriched in polar residues; it reads PSTSRPTAPS. Tyr135 bears the Phosphotyrosine; by host mark. Residues 191 to 228 are interaction with human PPIA/CYPA and NUP153; it reads NCVGDHQAAMQIIREIINEEAAEWDVQHPIPGPLPAGQ. The segment at 279-365 is dimerization/Multimerization of capsid protein p24; it reads YNPTNILDIK…GGPGQKARLM (87 aa). 2 consecutive CCHC-type zinc fingers follow at residues 389–406 and 410–427; these read FKCW…QCRA and QGCW…NCPD. Positions 432-500 are disordered; that stretch reads FLRTGPLGKE…RGLTAPRAGG (69 aa). The span at 456–469 shows a compositional bias: low complexity; sequence TNSTPSGSSSGSTG. Over residues 473-485 the composition is skewed to basic and acidic residues; sequence AAREKTERAERET. The segment at 514-518 is dimerization of protease; it reads PQFSL. Residues 533–602 form the Peptidase A2 domain; that stretch reads VEVLLDTGAD…TPINIFGRNI (70 aa). The For protease activity; shared with dimeric partner role is filled by Asp538. 2 dimerization of protease regions span residues 562-568 and 601-613; these read GIGGFIN and NILT…LNLP. Positions 656–846 constitute a Reverse transcriptase domain; that stretch reads EGQLEEAPPT…PPYHWMGYEL (191 aa). 3 residues coordinate Mg(2+): Asp722, Asp797, and Asp798. The segment at 839–847 is RT 'primer grip'; sequence YHWMGYELW. The short motif at 1009-1025 is the Tryptophan repeat motif element; that stretch reads WEQWWDNYWQVTWIPDW. The region spanning 1045–1168 is the RNase H type-1 domain; that stretch reads IPGAETFYTD…VDHLVSQGIR (124 aa). Positions 1054, 1089, 1109, and 1160 each coordinate Mg(2+). The Integrase-type zinc-finger motif lies at 1174-1215; that stretch reads EKIEPAQEEHEKYHSNVKELSHKFGIPNLVARQIVNSCAQCQ. 4 residues coordinate Zn(2+): His1183, His1187, Cys1211, and Cys1214. Positions 1224-1375 constitute an Integrase catalytic domain; the sequence is QVNAELGTWQ…TPSERLINMI (152 aa). Mg(2+) is bound by residues Asp1235, Asp1287, and Glu1323. The integrase-type DNA-binding region spans 1394-1441; sequence FRVYFREGRDQLWKGPGELLWKGEGAVLVKVGTDIKIIPRRKAKIIRD.

Homotrimer; further assembles as hexamers of trimers. Interacts with gp41 (via C-terminus). Interacts with host CALM1; this interaction induces a conformational change in the Matrix protein, triggering exposure of the myristate group. Interacts with host AP3D1; this interaction allows the polyprotein trafficking to multivesicular bodies during virus assembly. Part of the pre-integration complex (PIC) which is composed of viral genome, matrix protein, Vpr and integrase. In terms of assembly, homodimer; the homodimer further multimerizes as homohexamers or homopentamers. Interacts with human PPIA/CYPA. Interacts with human NUP153. Interacts with host PDZD8; this interaction stabilizes the capsid. Interacts with monkey TRIM5; this interaction destabilizes the capsid. As to quaternary structure, homodimer, whose active site consists of two apposed aspartic acid residues. Heterodimer of p66 RT and p51 RT (RT p66/p51). Heterodimerization of RT is essential for DNA polymerase activity. The overall folding of the subdomains is similar in p66 RT and p51 RT but the spatial arrangements of the subdomains are dramatically different. In terms of assembly, homotetramer; may further associate as a homohexadecamer. Part of the pre-integration complex (PIC) which is composed of viral genome, matrix protein, Vpr and integrase. Interacts with human SMARCB1/INI1 and human PSIP1/LEDGF isoform 1. Interacts with human KPNA3; this interaction might play a role in nuclear import of the pre-integration complex. Interacts with human NUP153; this interaction might play a role in nuclear import of the pre-integration complex. Mg(2+) is required as a cofactor. Post-translationally, specific enzymatic cleavages by the viral protease yield mature proteins. The protease is released by autocatalytic cleavage. The polyprotein is cleaved during and after budding, this process is termed maturation. Proteolytic cleavage of p66 RT removes the RNase H domain to yield the p51 RT subunit. Nucleocapsid protein p7 might be further cleaved after virus entry.

Its subcellular location is the host cell membrane. It is found in the host endosome. It localises to the host multivesicular body. The protein localises to the virion membrane. The protein resides in the host nucleus. Its subcellular location is the host cytoplasm. It is found in the virion. The enzyme catalyses Endopeptidase for which the P1 residue is preferably hydrophobic.. The catalysed reaction is Endohydrolysis of RNA in RNA/DNA hybrids. Three different cleavage modes: 1. sequence-specific internal cleavage of RNA. Human immunodeficiency virus type 1 and Moloney murine leukemia virus enzymes prefer to cleave the RNA strand one nucleotide away from the RNA-DNA junction. 2. RNA 5'-end directed cleavage 13-19 nucleotides from the RNA end. 3. DNA 3'-end directed cleavage 15-20 nucleotides away from the primer terminus.. It catalyses the reaction 3'-end directed exonucleolytic cleavage of viral RNA-DNA hybrid.. It carries out the reaction DNA(n) + a 2'-deoxyribonucleoside 5'-triphosphate = DNA(n+1) + diphosphate. With respect to regulation, protease: The viral protease is inhibited by many synthetic protease inhibitors (PIs), such as amprenavir, atazanavir, indinavir, loprinavir, nelfinavir, ritonavir and saquinavir. Use of protease inhibitors in tritherapy regimens permit more ambitious therapeutic strategies. Reverse transcriptase/ribonuclease H: RT can be inhibited either by nucleoside RT inhibitors (NRTIs) or by non nucleoside RT inhibitors (NNRTIs). NRTIs act as chain terminators, whereas NNRTIs inhibit DNA polymerization by binding a small hydrophobic pocket near the RT active site and inducing an allosteric change in this region. Classical NRTIs are abacavir, adefovir (PMEA), didanosine (ddI), lamivudine (3TC), stavudine (d4T), tenofovir (PMPA), zalcitabine (ddC), and zidovudine (AZT). Classical NNRTIs are atevirdine (BHAP U-87201E), delavirdine, efavirenz (DMP-266), emivirine (I-EBU), and nevirapine (BI-RG-587). The tritherapies used as a basic effective treatment of AIDS associate two NRTIs and one NNRTI. Its function is as follows. Mediates, with Gag polyprotein, the essential events in virion assembly, including binding the plasma membrane, making the protein-protein interactions necessary to create spherical particles, recruiting the viral Env proteins, and packaging the genomic RNA via direct interactions with the RNA packaging sequence (Psi). Gag-Pol polyprotein may regulate its own translation, by the binding genomic RNA in the 5'-UTR. At low concentration, the polyprotein would promote translation, whereas at high concentration, the polyprotein would encapsidate genomic RNA and then shut off translation. Functionally, targets the polyprotein to the plasma membrane via a multipartite membrane-binding signal, that includes its myristoylated N-terminus. Matrix protein is part of the pre-integration complex. Implicated in the release from host cell mediated by Vpu. Binds to RNA. In terms of biological role, forms the conical core that encapsulates the genomic RNA-nucleocapsid complex in the virion. Most core are conical, with only 7% tubular. The core is constituted by capsid protein hexamer subunits. The core is disassembled soon after virion entry. Host restriction factors such as TRIM5-alpha or TRIMCyp bind retroviral capsids and cause premature capsid disassembly, leading to blocks in reverse transcription. Capsid restriction by TRIM5 is one of the factors which restricts HIV-1 to the human species. Host PIN1 apparently facilitates the virion uncoating. On the other hand, interactions with PDZD8 or CYPA stabilize the capsid. Encapsulates and protects viral dimeric unspliced genomic RNA (gRNA). Binds these RNAs through its zinc fingers. Acts as a nucleic acid chaperone which is involved in rearangement of nucleic acid secondary structure during gRNA retrotranscription. Also facilitates template switch leading to recombination. As part of the polyprotein, participates in gRNA dimerization, packaging, tRNA incorporation and virion assembly. Its function is as follows. Aspartyl protease that mediates proteolytic cleavages of Gag and Gag-Pol polyproteins during or shortly after the release of the virion from the plasma membrane. Cleavages take place as an ordered, step-wise cascade to yield mature proteins. This process is called maturation. Displays maximal activity during the budding process just prior to particle release from the cell. Also cleaves Nef and Vif, probably concomitantly with viral structural proteins on maturation of virus particles. Hydrolyzes host EIF4GI and PABP1 in order to shut off the capped cellular mRNA translation. The resulting inhibition of cellular protein synthesis serves to ensure maximal viral gene expression and to evade host immune response. Functionally, multifunctional enzyme that converts the viral RNA genome into dsDNA in the cytoplasm, shortly after virus entry into the cell. This enzyme displays a DNA polymerase activity that can copy either DNA or RNA templates, and a ribonuclease H (RNase H) activity that cleaves the RNA strand of RNA-DNA heteroduplexes in a partially processive 3' to 5' endonucleasic mode. Conversion of viral genomic RNA into dsDNA requires many steps. A tRNA(3)-Lys binds to the primer-binding site (PBS) situated at the 5'-end of the viral RNA. RT uses the 3' end of the tRNA primer to perform a short round of RNA-dependent minus-strand DNA synthesis. The reading proceeds through the U5 region and ends after the repeated (R) region which is present at both ends of viral RNA. The portion of the RNA-DNA heteroduplex is digested by the RNase H, resulting in a ssDNA product attached to the tRNA primer. This ssDNA/tRNA hybridizes with the identical R region situated at the 3' end of viral RNA. This template exchange, known as minus-strand DNA strong stop transfer, can be either intra- or intermolecular. RT uses the 3' end of this newly synthesized short ssDNA to perform the RNA-dependent minus-strand DNA synthesis of the whole template. RNase H digests the RNA template except for two polypurine tracts (PPTs) situated at the 5'-end and near the center of the genome. It is not clear if both polymerase and RNase H activities are simultaneous. RNase H probably can proceed both in a polymerase-dependent (RNA cut into small fragments by the same RT performing DNA synthesis) and a polymerase-independent mode (cleavage of remaining RNA fragments by free RTs). Secondly, RT performs DNA-directed plus-strand DNA synthesis using the PPTs that have not been removed by RNase H as primers. PPTs and tRNA primers are then removed by RNase H. The 3' and 5' ssDNA PBS regions hybridize to form a circular dsDNA intermediate. Strand displacement synthesis by RT to the PBS and PPT ends produces a blunt ended, linear dsDNA copy of the viral genome that includes long terminal repeats (LTRs) at both ends. In terms of biological role, catalyzes viral DNA integration into the host chromosome, by performing a series of DNA cutting and joining reactions. This enzyme activity takes place after virion entry into a cell and reverse transcription of the RNA genome in dsDNA. The first step in the integration process is 3' processing. This step requires a complex comprising the viral genome, matrix protein, Vpr and integrase. This complex is called the pre-integration complex (PIC). The integrase protein removes 2 nucleotides from each 3' end of the viral DNA, leaving recessed CA OH's at the 3' ends. In the second step, the PIC enters cell nucleus. This process is mediated through integrase and Vpr proteins, and allows the virus to infect a non dividing cell. This ability to enter the nucleus is specific of lentiviruses, other retroviruses cannot and rely on cell division to access cell chromosomes. In the third step, termed strand transfer, the integrase protein joins the previously processed 3' ends to the 5' ends of strands of target cellular DNA at the site of integration. The 5'-ends are produced by integrase-catalyzed staggered cuts, 5 bp apart. A Y-shaped, gapped, recombination intermediate results, with the 5'-ends of the viral DNA strands and the 3' ends of target DNA strands remaining unjoined, flanking a gap of 5 bp. The last step is viral DNA integration into host chromosome. This involves host DNA repair synthesis in which the 5 bp gaps between the unjoined strands are filled in and then ligated. Since this process occurs at both cuts flanking the HIV genome, a 5 bp duplication of host DNA is produced at the ends of HIV-1 integration. Alternatively, Integrase may catalyze the excision of viral DNA just after strand transfer, this is termed disintegration. The chain is Gag-Pol polyprotein (gag-pol) from Homo sapiens (Human).